An 87-amino-acid polypeptide reads, in one-letter code: Candoxin (87 aa).

The first 21 residues, 1–21, serve as a signal peptide directing secretion; the sequence is MKTLLLTLVVVTIVCLDLGYT. 5 cysteine pairs are disulfide-bonded: Cys-24-Cys-47, Cys-27-Cys-32, Cys-40-Cys-64, Cys-68-Cys-80, and Cys-81-Cys-86.

Expressed by the venom gland.

The protein resides in the secreted. In terms of biological role, binds and inhibits muscular and neuronal nicotinic acetylcholine receptors (nAChR). Is a reversible antagonist of muscle nAChR (alpha-1-beta-1-delta-epsilon/CHRNA1-CHRNB1-CHRND-CHRNE) (IC(50)=10 nM) and a potent and poorly reversible antagonist of the neuronal alpha-7/CHRNA7 nAChR (IC(50)=50 nM). May exhibit differential affinities for the two binding sites on the muscle nAChR. This Bungarus candidus (Malayan krait) protein is Candoxin.